A 300-amino-acid polypeptide reads, in one-letter code: Geranylgeranyl pyrophosphate synthase (300 aa).

N-acetylmethionine is present on Met-1. Isopentenyl diphosphate-binding residues include Lys-25, Arg-28, and His-57. Residues Asp-64 and Asp-68 each coordinate Mg(2+). Arg-73 provides a ligand contact to dimethylallyl diphosphate. Arg-74 contacts isopentenyl diphosphate. Residues Lys-151, Thr-152, Gln-185, Lys-202, and Lys-212 each coordinate dimethylallyl diphosphate.

Belongs to the FPP/GGPP synthase family. In terms of assembly, homohexamer; trimer of homodimers. Mg(2+) is required as a cofactor.

The protein localises to the cytoplasm. It is found in the perinuclear region. Its subcellular location is the myofibril. It localises to the sarcomere. The protein resides in the z line. It carries out the reaction isopentenyl diphosphate + dimethylallyl diphosphate = (2E)-geranyl diphosphate + diphosphate. It catalyses the reaction isopentenyl diphosphate + (2E)-geranyl diphosphate = (2E,6E)-farnesyl diphosphate + diphosphate. The catalysed reaction is isopentenyl diphosphate + (2E,6E)-farnesyl diphosphate = (2E,6E,10E)-geranylgeranyl diphosphate + diphosphate. Its pathway is isoprenoid biosynthesis; farnesyl diphosphate biosynthesis; farnesyl diphosphate from geranyl diphosphate and isopentenyl diphosphate: step 1/1. It participates in isoprenoid biosynthesis; geranyl diphosphate biosynthesis; geranyl diphosphate from dimethylallyl diphosphate and isopentenyl diphosphate: step 1/1. The protein operates within isoprenoid biosynthesis; geranylgeranyl diphosphate biosynthesis; geranylgeranyl diphosphate from farnesyl diphosphate and isopentenyl diphosphate: step 1/1. Functionally, catalyzes the trans-addition of the three molecules of IPP onto DMAPP to form geranylgeranyl pyrophosphate, an important precursor of carotenoids and geranylated proteins. In Rattus norvegicus (Rat), this protein is Geranylgeranyl pyrophosphate synthase (Ggps1).